The sequence spans 1253 residues: Myosin-1 (1253 aa).

The interval 1 to 40 (MGHSRRPVGGEKKSRGFGRSKAAADVGDGRQAGKPQVKKA) is disordered. A Myosin motor domain is found at 50–729 (IGVSDLTLLS…TLFALEAMRD (680 aa)). 143-150 (GESGAGKT) contributes to the ATP binding site. Ser-371 carries the post-translational modification Phosphoserine. The segment at 418 to 500 (SIGILDIYGF…PGVFAALNDA (83 aa)) is actin-binding. 2 consecutive IQ domains span residues 733-753 (HNMA…RIEC) and 754-779 (ATRI…QGHQ). Residues 787–977 (RRRMSLLGSR…TIHTGAGEPA (191 aa)) form the TH1 domain. Disordered regions lie at residues 959-1083 (TGDD…PKKP) and 1139-1253 (QVAP…DDDW). Residues 1029–1055 (PQPAAAQPAAPQPAARVVPQPVAAVAA) show a composition bias toward low complexity. 2 stretches are compositionally biased toward pro residues: residues 1068–1081 (APPP…PAPK) and 1143–1155 (APKP…PPAA). One can recognise an SH3 domain in the interval 1080 to 1141 (PKKPTAKALY…PEAYLEEQVA (62 aa)). Composition is skewed to low complexity over residues 1156–1173 (PRST…AKAK) and 1221–1235 (NSAS…LAEA).

The protein belongs to the TRAFAC class myosin-kinesin ATPase superfamily. Myosin family. In terms of processing, phosphorylation of the TEDS site (Ser-371) is required for the polarization of the actin cytoskeleton. Phosphorylation probably activates the myosin-I ATPase activity.

Its subcellular location is the cytoplasm. The protein localises to the cytoskeleton. The protein resides in the actin patch. Type-I myosin implicated in the organization of the actin cytoskeleton. Required for proper actin cytoskeleton polarization. At the cell cortex, assembles in patch-like structures together with proteins from the actin-polymerizing machinery and promotes actin assembly. Functions as actin nucleation-promoting factor (NPF) for the Arp2/3 complex. Plays an important role in polarized growth, spore germination, hyphal morphogenesis, and septal wall formation. This is Myosin-1 (myoA) from Aspergillus clavatus (strain ATCC 1007 / CBS 513.65 / DSM 816 / NCTC 3887 / NRRL 1 / QM 1276 / 107).